We begin with the raw amino-acid sequence, 366 residues long: Nucleoporin SEH1 (366 aa).

WD repeat units lie at residues 18 to 57, 63 to 104, 111 to 152, 161 to 209, 226 to 267, and 290 to 329; these read AHRDLIHCVSFDPHGRRMATCASDMTMAIWDRQPDGNWRR, CHGG…TEKD, QWIR…RIYE, RWNL…VIYE, DMPC…TAIL, and GDQRKAWRIRYNLIGSVITSTSLDGTLRSWKSLFVNQWVK.

This sequence belongs to the WD repeat SEC13 family. Component of the nuclear pore complex (NPC). Probably part of the GATOR complex.

Its subcellular location is the nucleus. The protein resides in the nuclear pore complex. It is found in the lysosome membrane. In terms of biological role, probable component of the nuclear pore complex (NPC) which is involved in the trafficking of macromolecules between the cytoplasm and nucleus. Its function is as follows. As a component of the GATOR complex may function in the amino acid-sensing branch of the TORC1 signaling pathway. The polypeptide is Nucleoporin SEH1 (Caenorhabditis briggsae).